The sequence spans 387 residues: Alkanesulfonate monooxygenase (387 aa).

It belongs to the SsuD family.

The catalysed reaction is an alkanesulfonate + FMNH2 + O2 = an aldehyde + FMN + sulfite + H2O + 2 H(+). Catalyzes the desulfonation of aliphatic sulfonates. The sequence is that of Alkanesulfonate monooxygenase from Xanthomonas axonopodis pv. citri (strain 306).